We begin with the raw amino-acid sequence, 119 residues long: NLVQFSYVITCANHNRRSSLDYADYGCYCGAGGSGTPVDELDRCCKIHDDCYGEAEKQGCYPKMLMYDYYCGSNGPYCRNVKKKCNRKVCDCDVAAAECFARNAYNNANYNIDTKKRCK.

Intrachain disulfides connect cysteine 11-cysteine 71, cysteine 27-cysteine 118, cysteine 29-cysteine 45, cysteine 44-cysteine 99, cysteine 51-cysteine 92, cysteine 60-cysteine 85, and cysteine 78-cysteine 90. Positions 28, 30, and 32 each coordinate Ca(2+). Histidine 48 is an active-site residue. Aspartate 49 is a binding site for Ca(2+). The active site involves aspartate 93.

The protein belongs to the phospholipase A2 family. Group I subfamily. D49 sub-subfamily. It depends on Ca(2+) as a cofactor. In terms of tissue distribution, expressed by the venom gland.

It localises to the secreted. The catalysed reaction is a 1,2-diacyl-sn-glycero-3-phosphocholine + H2O = a 1-acyl-sn-glycero-3-phosphocholine + a fatty acid + H(+). In terms of biological role, snake venom phospholipase A2 (PLA2) that has several activities. It is myotoxic, has weak anticoagulant activity and inhibits neuromuscular transmission by blocking acetylcholine release from the nerve termini. PLA2 catalyzes the calcium-dependent hydrolysis of the 2-acyl groups in 3-sn-phosphoglycerides. This Hydrophis schistosus (Beaked sea snake) protein is Basic phospholipase A2.